A 234-amino-acid chain; its full sequence is (5-formylfuran-3-yl)methyl phosphate synthase (234 aa).

K27 serves as the catalytic Schiff-base intermediate with substrate. K85 serves as the catalytic Proton acceptor.

This sequence belongs to the MfnB family.

The enzyme catalyses 2 D-glyceraldehyde 3-phosphate = 4-(hydroxymethyl)-2-furancarboxaldehyde phosphate + phosphate + 2 H2O. It participates in cofactor biosynthesis; methanofuran biosynthesis. Its function is as follows. Catalyzes the formation of 4-(hydroxymethyl)-2-furancarboxaldehyde phosphate (4-HFC-P) from two molecules of glyceraldehyde-3-P (GA-3-P). In Methanosarcina barkeri (strain Fusaro / DSM 804), this protein is (5-formylfuran-3-yl)methyl phosphate synthase.